We begin with the raw amino-acid sequence, 309 residues long: Carbamate kinase-like protein (309 aa).

The disordered stretch occupies residues 125 to 144 (NKPVGPFYNTEETARSANPN).

This sequence belongs to the carbamate kinase family.

This Mycoplasma pneumoniae (strain ATCC 29342 / M129 / Subtype 1) (Mycoplasmoides pneumoniae) protein is Carbamate kinase-like protein.